A 79-amino-acid chain; its full sequence is Morintide mO2 (79 aa).

The N-terminal stretch at 1-20 is a signal peptide; that stretch reads MAKLSFLSLFLLCLVATATA. Residues 21 to 63 form the Chitin-binding type-1 domain; the sequence is QNCGRQAGNRACANGLCCSQYGFCGSTSEYCSRANGCQSNCRG. 4 disulfide bridges follow: cysteine 23-cysteine 38, cysteine 32-cysteine 44, cysteine 37-cysteine 51, and cysteine 57-cysteine 61. Residues 64–79 constitute a propeptide that is removed on maturation; it reads GGGAGGAGGGAGGGSP.

As to expression, leaves (at protein level).

In terms of biological role, chitin-binding protein which functions in defense against chitin-containing fungal pathogens. This chain is Morintide mO2, found in Moringa oleifera (Horseradish tree).